A 366-amino-acid chain; its full sequence is Peroxisomal (S)-2-hydroxy-acid oxidase GLO4 (366 aa).

Residues 1 to 360 form the FMN hydroxy acid dehydrogenase domain; sequence MEDNLPVNVR…TRSHVMTEGD (360 aa). Y27 is an a 2-oxocarboxylate binding site. FMN contacts are provided by residues 80 to 82, S109, 130 to 132, and T158; these read PTG and QLY. A 2-oxocarboxylate is bound at residue Y132. An a 2-oxocarboxylate-binding site is contributed by R167. FMN is bound by residues K231 and S253. The Proton acceptor role is filled by H255. R258 is an a 2-oxocarboxylate binding site. Residues 286–290 and 309–310 contribute to the FMN site; these read DGGIR and GR. The Microbody targeting signal signature appears at 364 to 366; sequence SLL.

The protein belongs to the FMN-dependent alpha-hydroxy acid dehydrogenase family. As to quaternary structure, homotetramer. Binds to CATB and CATC; these interactions are disturbed by alpha-hydroxy-2-pyridinemethanesulfonic acid (HPMS) and salicylic acid (SA). The cofactor is FMN.

The protein resides in the peroxisome. The enzyme catalyses a (2S)-2-hydroxycarboxylate + O2 = a 2-oxocarboxylate + H2O2. Its pathway is lipid metabolism; fatty acid metabolism. Its function is as follows. Oxidase that catalyzes the oxidation of a broad range of 2-hydroxyacids to the corresponding 2-oxoacids, with a reduction of O2 to H2O2. May be involved in a general medium- and long-chain fatty acid catabolic pathway such as alpha-oxidation. The sequence is that of Peroxisomal (S)-2-hydroxy-acid oxidase GLO4 (GLO4) from Oryza sativa subsp. japonica (Rice).